The sequence spans 417 residues: Serine--tRNA ligase (417 aa).

232 to 234 lines the L-serine pocket; the sequence is TSE. 263–265 is a binding site for ATP; sequence RKE. L-serine is bound at residue E286. 350 to 353 serves as a coordination point for ATP; the sequence is EISS. S385 is an L-serine binding site.

It belongs to the class-II aminoacyl-tRNA synthetase family. Type-1 seryl-tRNA synthetase subfamily. Homodimer. The tRNA molecule binds across the dimer.

The protein resides in the cytoplasm. It carries out the reaction tRNA(Ser) + L-serine + ATP = L-seryl-tRNA(Ser) + AMP + diphosphate + H(+). The enzyme catalyses tRNA(Sec) + L-serine + ATP = L-seryl-tRNA(Sec) + AMP + diphosphate + H(+). Its pathway is aminoacyl-tRNA biosynthesis; selenocysteinyl-tRNA(Sec) biosynthesis; L-seryl-tRNA(Sec) from L-serine and tRNA(Sec): step 1/1. In terms of biological role, catalyzes the attachment of serine to tRNA(Ser). Is also able to aminoacylate tRNA(Sec) with serine, to form the misacylated tRNA L-seryl-tRNA(Sec), which will be further converted into selenocysteinyl-tRNA(Sec). The sequence is that of Serine--tRNA ligase from Campylobacter hominis (strain ATCC BAA-381 / DSM 21671 / CCUG 45161 / LMG 19568 / NCTC 13146 / CH001A).